A 229-amino-acid polypeptide reads, in one-letter code: Elongation factor 1-delta 1 (229 aa).

Residues 80–109 form a disordered region; that stretch reads ESTAVPSASTPDVADAKAPAADDDDDDDVD. Residues 100–109 show a composition bias toward acidic residues; the sequence is ADDDDDDDVD.

Belongs to the EF-1-beta/EF-1-delta family. As to quaternary structure, EF-1 is composed of 4 subunits: alpha, beta (1B-alpha=beta'), delta (1B-beta), and gamma (1B-gamma).

Its function is as follows. EF-1-beta and EF-1-beta' stimulate the exchange of GDP bound to EF-1-alpha to GTP. The sequence is that of Elongation factor 1-delta 1 from Oryza sativa subsp. japonica (Rice).